The sequence spans 118 residues: Ribonuclease P protein component (118 aa).

It belongs to the RnpA family. As to quaternary structure, consists of a catalytic RNA component (M1 or rnpB) and a protein subunit.

It catalyses the reaction Endonucleolytic cleavage of RNA, removing 5'-extranucleotides from tRNA precursor.. Its function is as follows. RNaseP catalyzes the removal of the 5'-leader sequence from pre-tRNA to produce the mature 5'-terminus. It can also cleave other RNA substrates such as 4.5S RNA. The protein component plays an auxiliary but essential role in vivo by binding to the 5'-leader sequence and broadening the substrate specificity of the ribozyme. This Ureaplasma urealyticum serovar 10 (strain ATCC 33699 / Western) protein is Ribonuclease P protein component.